Reading from the N-terminus, the 292-residue chain is tRNA pseudouridine synthase B (292 aa).

The active-site Nucleophile is Asp38.

This sequence belongs to the pseudouridine synthase TruB family. Type 1 subfamily.

It carries out the reaction uridine(55) in tRNA = pseudouridine(55) in tRNA. Functionally, responsible for synthesis of pseudouridine from uracil-55 in the psi GC loop of transfer RNAs. The sequence is that of tRNA pseudouridine synthase B from Streptococcus sanguinis (strain SK36).